Reading from the N-terminus, the 326-residue chain is tRNA U34 carboxymethyltransferase (326 aa).

Residues K95, W109, K114, G134, 184 to 185 (VE), Y204, and R319 each bind carboxy-S-adenosyl-L-methionine.

It belongs to the class I-like SAM-binding methyltransferase superfamily. CmoB family.

It carries out the reaction carboxy-S-adenosyl-L-methionine + 5-hydroxyuridine(34) in tRNA = 5-carboxymethoxyuridine(34) in tRNA + S-adenosyl-L-homocysteine + H(+). Functionally, catalyzes carboxymethyl transfer from carboxy-S-adenosyl-L-methionine (Cx-SAM) to 5-hydroxyuridine (ho5U) to form 5-carboxymethoxyuridine (cmo5U) at position 34 in tRNAs. The polypeptide is tRNA U34 carboxymethyltransferase (Trichodesmium erythraeum (strain IMS101)).